The primary structure comprises 329 residues: Porphobilinogen deaminase (329 aa).

Cys-250 carries the S-(dipyrrolylmethanemethyl)cysteine modification.

It belongs to the HMBS family. Monomer. Dipyrromethane is required as a cofactor.

The enzyme catalyses 4 porphobilinogen + H2O = hydroxymethylbilane + 4 NH4(+). It functions in the pathway porphyrin-containing compound metabolism; protoporphyrin-IX biosynthesis; coproporphyrinogen-III from 5-aminolevulinate: step 2/4. In terms of biological role, tetrapolymerization of the monopyrrole PBG into the hydroxymethylbilane pre-uroporphyrinogen in several discrete steps. The protein is Porphobilinogen deaminase of Burkholderia thailandensis (strain ATCC 700388 / DSM 13276 / CCUG 48851 / CIP 106301 / E264).